Consider the following 445-residue polypeptide: Phosphoglucosamine mutase (445 aa).

The Phosphoserine intermediate role is filled by serine 102. 4 residues coordinate Mg(2+): serine 102, aspartate 241, aspartate 243, and aspartate 245. Residue serine 102 is modified to Phosphoserine.

The protein belongs to the phosphohexose mutase family. It depends on Mg(2+) as a cofactor. Post-translationally, activated by phosphorylation.

It catalyses the reaction alpha-D-glucosamine 1-phosphate = D-glucosamine 6-phosphate. Functionally, catalyzes the conversion of glucosamine-6-phosphate to glucosamine-1-phosphate. In Pectobacterium carotovorum subsp. carotovorum (strain PC1), this protein is Phosphoglucosamine mutase.